A 485-amino-acid polypeptide reads, in one-letter code: NADH-quinone oxidoreductase subunit N (485 aa).

14 helical membrane-spanning segments follow: residues 8 to 28 (LIAL…MLSI), 35 to 55 (FLNA…LWFV), 71 to 91 (GFAM…CTFA), 105 to 125 (FYLL…ANHL), 127 to 147 (SLFL…GYAF), 159 to 179 (YTIL…LVYA), 203 to 223 (LLAG…LVPF), 235 to 255 (PAPV…GVVM), 271 to 291 (VVLA…ALSQ), 297 to 317 (LLGY…IALQ), 326 to 346 (VGVY…VVSL), 373 to 393 (AAVM…LGFI), 408 to 430 (WWLV…RVAV), and 455 to 475 (IVVL…QPLI).

It belongs to the complex I subunit 2 family. NDH-1 is composed of 13 different subunits. Subunits NuoA, H, J, K, L, M, N constitute the membrane sector of the complex.

It localises to the cell inner membrane. The enzyme catalyses a quinone + NADH + 5 H(+)(in) = a quinol + NAD(+) + 4 H(+)(out). In terms of biological role, NDH-1 shuttles electrons from NADH, via FMN and iron-sulfur (Fe-S) centers, to quinones in the respiratory chain. The immediate electron acceptor for the enzyme in this species is believed to be ubiquinone. Couples the redox reaction to proton translocation (for every two electrons transferred, four hydrogen ions are translocated across the cytoplasmic membrane), and thus conserves the redox energy in a proton gradient. The chain is NADH-quinone oxidoreductase subunit N from Shigella sonnei (strain Ss046).